Reading from the N-terminus, the 182-residue chain is Early nodulin-like protein 14 (182 aa).

The N-terminal stretch at methionine 1–alanine 28 is a signal peptide. A Phytocyanin domain is found at asparagine 29–serine 133. Cysteine 87 and cysteine 121 are oxidised to a cystine. Residues asparagine 88 and asparagine 95 are each glycosylated (N-linked (GlcNAc...) asparagine). The GPI-anchor amidated serine moiety is linked to residue serine 160. Positions glycine 161–phenylalanine 182 are cleaved as a propeptide — removed in mature form.

Belongs to the early nodulin-like (ENODL) family. As to quaternary structure, interacts strongly and specifically with the extracellular domain of FERONIA at the synergid cell surface. In terms of tissue distribution, mostly expressed in seedlings and flowers, and, to a lower extent, in roots, stems and seeds, but barely in leaves.

Its subcellular location is the cell membrane. In terms of biological role, may act as a carbohydrate transporter. Required, together with ENODL11, ENODL12, ENODL13, ENODL14 and ENODL15, for male-female communication and pollen tube reception and burst at the synergid cell surface of the female gametophyte. The sequence is that of Early nodulin-like protein 14 from Arabidopsis thaliana (Mouse-ear cress).